Here is a 353-residue protein sequence, read N- to C-terminus: Protein Wnt-11b-1 (353 aa).

An N-terminal signal peptide occupies residues 1–22 (MAQIHHCVTLLLILCCSGLCGA). N31, N38, and N88 each carry an N-linked (GlcNAc...) asparagine glycan. Cystine bridges form between C78/C89, C128/C136, C138/C155, C208/C222, and C210/C217. S214 carries O-palmitoleoyl serine; by PORCN lipidation. A sulfotyrosine mark is found at Y274 and Y281. 6 disulfide bridges follow: C282–C313, C298–C308, C312–C352, C328–C343, C330–C340, and C335–C336. The N-linked (GlcNAc...) asparagine glycan is linked to N299.

Belongs to the Wnt family. Homodimer. Secreted homodimers form a complex with wnt5a homodimers; tyrosine sulfation of both wnt11 and wnt5a by tpst1 is required for this interaction. Interacts with the transmembrane receptor fzd7/fz7. Interacts with lrp6 and ryk. Interacts with tdgf1/frl1. Interacts weakly with frzb1 and strongly with frzb2/crescent. Interaction with frzb2/crescent antagonizes wnt11 function in the neuroectoderm, but enhances it in mesodermal tissue. Post-translationally, glycosylation is required for protein secretion. Palmitoleoylation is required for efficient binding to frizzled receptors. Depalmitoleoylation leads to Wnt signaling pathway inhibition.

Its subcellular location is the secreted. It localises to the extracellular space. It is found in the extracellular matrix. Ligand for the frizzled7 transmembrane receptor. Primarily acts via non-canonical Wnt pathways mediated by either Ca(2+) and PKC, or by JNK and dvl2/dsh. Depending on the cellular context, can also signal via the canonical Wnt pathway mediated by beta-catenin and dvl2/dsh. May also inhibit canonical Wnt signaling. Maternally initiates dorsal/ventral axis formation by a canonical route, which signals via lrp6. In a complex with wnt5a, activates the canonical and non-canonical processes involved in axis formation. In the non-canonical pathway, acts through fzd7/fz7 to induce phosphorylation of dvl2/dsh. Signals through a non-canonical Wnt pathway to regulate convergent extension movements during gastrulation. Interactions with the secreted Wnt antagonist sfrp5 to coordinate foregut development, acting via a non-canonical wnt pathway whereby sfrp5 restricts wnt11b activity to prevent inappropriate foregut formation. Mediates cardiogenesis via non-canonical Wnt signaling involving JNK-activation and PKC. Acts redundantly with wnt11/wnt11r during pronephros induction. The sequence is that of Protein Wnt-11b-1 from Xenopus tropicalis (Western clawed frog).